The sequence spans 590 residues: Aspartate--tRNA(Asp/Asn) ligase (590 aa).

L-aspartate is bound at residue E175. The segment at 199–202 is aspartate; the sequence is QQYK. L-aspartate contacts are provided by R221 and H450. 221–223 serves as a coordination point for ATP; the sequence is RDE. E484 serves as a coordination point for ATP. R491 provides a ligand contact to L-aspartate. 536–539 serves as a coordination point for ATP; it reads GVDR.

The protein belongs to the class-II aminoacyl-tRNA synthetase family. Type 1 subfamily. As to quaternary structure, homodimer.

Its subcellular location is the cytoplasm. The enzyme catalyses tRNA(Asx) + L-aspartate + ATP = L-aspartyl-tRNA(Asx) + AMP + diphosphate. In terms of biological role, aspartyl-tRNA synthetase with relaxed tRNA specificity since it is able to aspartylate not only its cognate tRNA(Asp) but also tRNA(Asn). Reaction proceeds in two steps: L-aspartate is first activated by ATP to form Asp-AMP and then transferred to the acceptor end of tRNA(Asp/Asn). This is Aspartate--tRNA(Asp/Asn) ligase from Rhodopseudomonas palustris (strain BisA53).